The sequence spans 179 residues: MSRIGKNPIPIPDKVAVTLDGLAVSVKGPKGELSRTLPEGVSVSQVENTIVVTPTSQKRKSRERHGLCRSLVANMVEGVSKGYTRKLELIGVGSRAQVKGKKLVVSAGFSHPVEMDPPEGVTFAVENNTNVTVSGADKELVGNEAAKIRAIRPPEPYKGKGIRYEGERILRKAGKSGKK.

This sequence belongs to the universal ribosomal protein uL6 family. Part of the 50S ribosomal subunit.

In terms of biological role, this protein binds to the 23S rRNA, and is important in its secondary structure. It is located near the subunit interface in the base of the L7/L12 stalk, and near the tRNA binding site of the peptidyltransferase center. In Prochlorococcus marinus (strain MIT 9313), this protein is Large ribosomal subunit protein uL6.